Here is a 495-residue protein sequence, read N- to C-terminus: Ectonucleoside triphosphate diphosphohydrolase 2 (495 aa).

The Cytoplasmic portion of the chain corresponds to 1–4; it reads MAGK. The helical transmembrane segment at 5 to 25 threads the bilayer; the sequence is LVSLVPPLLLAAVGLAGLLLL. Residues 26–462 are Extracellular-facing; the sequence is CVPTQDVREP…PGLRKGTHFS (437 aa). A glycan (N-linked (GlcNAc...) asparagine) is linked at N64. A disulfide bond links C75 and C99. A glycan (N-linked (GlcNAc...) asparagine) is linked at N129. E165 acts as the Proton acceptor in catalysis. 204-208 contributes to the ATP binding site; the sequence is GASTQ. Intrachain disulfides connect C242–C284 and C265–C310. 2 N-linked (GlcNAc...) asparagine glycosylation sites follow: N294 and N319. 2 cysteine pairs are disulfide-bonded: C323-C328 and C377-C399. N-linked (GlcNAc...) asparagine glycosylation is found at N378 and N443. The helical transmembrane segment at 463 to 483 threads the bilayer; it reads SWVALLLLFTVLILAALVLLL. Residues 484–495 are Cytoplasmic-facing; it reads RQVRSAKSPGAL.

The protein belongs to the GDA1/CD39 NTPase family. It depends on Ca(2+) as a cofactor. The cofactor is Mg(2+).

Its subcellular location is the cell membrane. In terms of biological role, in the nervous system, could hydrolyze ATP and other nucleotides to regulate purinergic neurotransmission. Hydrolyzes ADP only to a marginal extent. In Mus musculus (Mouse), this protein is Ectonucleoside triphosphate diphosphohydrolase 2 (Entpd2).